The primary structure comprises 405 residues: Riboflavin biosynthesis protein RibBA (405 aa).

Residues 1-205 are DHBP synthase; that stretch reads MSEIQLNTIE…IKDLIAYRLR (205 aa). Residues 30–31, aspartate 35, 144–148, and glutamate 168 each bind D-ribulose 5-phosphate; these read RE and RAGHT. Glutamate 31 contributes to the Mg(2+) binding site. Histidine 147 contacts Mg(2+). Positions 206-405 are GTP cyclohydrolase II; sequence TESIVENGVE…RMGHVLHNIK (200 aa). 256–260 contacts GTP; it reads RVHSS. Positions 261, 272, and 274 each coordinate Zn(2+). GTP is bound by residues glutamine 277, 299-301, and threonine 321; that span reads EGR. Aspartate 333 functions as the Proton acceptor; for GTP cyclohydrolase activity in the catalytic mechanism. Arginine 335 (nucleophile; for GTP cyclohydrolase activity) is an active-site residue. GTP-binding residues include serine 356 and lysine 361.

The protein in the N-terminal section; belongs to the DHBP synthase family. This sequence in the C-terminal section; belongs to the GTP cyclohydrolase II family. Mg(2+) is required as a cofactor. It depends on Mn(2+) as a cofactor. Zn(2+) serves as cofactor.

It catalyses the reaction D-ribulose 5-phosphate = (2S)-2-hydroxy-3-oxobutyl phosphate + formate + H(+). The enzyme catalyses GTP + 4 H2O = 2,5-diamino-6-hydroxy-4-(5-phosphoribosylamino)-pyrimidine + formate + 2 phosphate + 3 H(+). The protein operates within cofactor biosynthesis; riboflavin biosynthesis; 2-hydroxy-3-oxobutyl phosphate from D-ribulose 5-phosphate: step 1/1. Its pathway is cofactor biosynthesis; riboflavin biosynthesis; 5-amino-6-(D-ribitylamino)uracil from GTP: step 1/4. Functionally, catalyzes the conversion of D-ribulose 5-phosphate to formate and 3,4-dihydroxy-2-butanone 4-phosphate. Catalyzes the conversion of GTP to 2,5-diamino-6-ribosylamino-4(3H)-pyrimidinone 5'-phosphate (DARP), formate and pyrophosphate. The chain is Riboflavin biosynthesis protein RibBA from Parabacteroides distasonis (strain ATCC 8503 / DSM 20701 / CIP 104284 / JCM 5825 / NCTC 11152).